A 180-amino-acid polypeptide reads, in one-letter code: Probable nicotinate-nucleotide adenylyltransferase (180 aa).

The protein belongs to the NadD family.

It carries out the reaction nicotinate beta-D-ribonucleotide + ATP + H(+) = deamido-NAD(+) + diphosphate. It participates in cofactor biosynthesis; NAD(+) biosynthesis; deamido-NAD(+) from nicotinate D-ribonucleotide: step 1/1. Functionally, catalyzes the reversible adenylation of nicotinate mononucleotide (NaMN) to nicotinic acid adenine dinucleotide (NaAD). The sequence is that of Probable nicotinate-nucleotide adenylyltransferase from Pelagibacter ubique (strain HTCC1062).